Here is a 273-residue protein sequence, read N- to C-terminus: DNA repair protein RecO (273 aa).

Residues 250-273 (NVGQNPSGKDDLNERRDVDGTGES) form a disordered region. Residues 257 to 273 (GKDDLNERRDVDGTGES) are compositionally biased toward basic and acidic residues.

Belongs to the RecO family.

In terms of biological role, involved in DNA repair and RecF pathway recombination. This chain is DNA repair protein RecO, found in Desulfitobacterium hafniense (strain Y51).